The sequence spans 306 residues: MSEGRTDGDTWGPAQSVGATATMVAAARAVASQGPDALLDDPLAEPLVRAVGLDPFIRIVEGKLDFPDDPLFNRRARAEQITVRTRFFDDFFIDATEAGLRQAVILASGLDTRAYRLTWPAGTVVYEIDQPQVIAFKTDTLANLGAAPTAERRTISIDLRDDWPAALREGGFDVTRPTAWSAEGLLPYLPPEAQDRLFDNITALSAPGSRLATEHVPDPNAFSDERLARISERWQRLGLNLNAADLFYRGERNVVADYLTGKGWRVTPHPARQLYARNGFEFPEDEMRATFGEMSYVDATLTGGRG.

S-adenosyl-L-methionine contacts are provided by residues Asp-129 and 158–159 (DL).

This sequence belongs to the UPF0677 family.

Functionally, exhibits S-adenosyl-L-methionine-dependent methyltransferase activity. This Mycolicibacterium paratuberculosis (strain ATCC BAA-968 / K-10) (Mycobacterium paratuberculosis) protein is Putative S-adenosyl-L-methionine-dependent methyltransferase MAP_4190c.